A 255-amino-acid chain; its full sequence is ParA family protein TC_0871 (255 aa).

Belongs to the ParA family.

The chain is ParA family protein TC_0871 from Chlamydia muridarum (strain MoPn / Nigg).